The chain runs to 480 residues: CASP8 and FADD-like apoptosis regulator (480 aa).

DED domains lie at 1 to 73 and 92 to 170; these read MSAE…RILK and DYRV…KIQK. The interaction with CASP8 stretch occupies residues 1-195; sequence MSAEVIHQVE…LQAAIQKSLK (195 aa). An interaction with FADD region spans residues 1–227; the sequence is MSAEVIHQVE…GAQQEPVKKS (227 aa). An interaction with CASP8 propeptide region spans residues 1 to 305; sequence MSAEVIHQVE…FACMPEHRDY (305 aa). Residues 1-435 are not proteolytically processed and involved in apoptosis inhibition; it reads MSAEVIHQVE…CLSQKLRQER (435 aa). An interaction with CASP3 region spans residues 192–435; the sequence is KSLKDPSNNF…CLSQKLRQER (244 aa). The interval 192-480 is interaction with TRAF1 and TRAF2; it reads KSLKDPSNNF…LRKKLILSYT (289 aa). Residues 217–480 form an interaction with CASP8 subunits p18 and p10 region; it reads LGAQQEPVKK…LRKKLILSYT (264 aa). The tract at residues 263 to 358 is caspase; the sequence is ETELLRDTFT…AGKPKMFFIQ (96 aa). Positions 370 to 480 are interaction with CASP8; the sequence is SSLLEVDGPA…LRKKLILSYT (111 aa).

This sequence belongs to the peptidase C14A family. As to quaternary structure, TNFRSF6 stimulation triggers recruitment to the death-inducing signaling complex (DISC) formed by TNFRSF6, FADD and CASP8. A proteolytic fragment (p43) stays associated with the DISC. Also interacts with FADD, CASP8, CASP3, TRAF1, TRAF2 and Bcl-X(L) (in vitro). Interacts with RIPK1. In terms of assembly, (Microbial infection) Interacts with HBV protein X. Post-translationally, proteolytically processed by CASP8 generating subunit p43 and p12. Widely expressed. Higher expression in skeletal muscle, pancreas, heart, kidney, placenta, and peripheral blood leukocytes. Also detected in diverse cell lines. Isoform 8 is predominantly expressed in testis and skeletal muscle.

Apoptosis regulator protein which may function as a crucial link between cell survival and cell death pathways in mammalian cells. Acts as an inhibitor of TNFRSF6 mediated apoptosis. A proteolytic fragment (p43) is likely retained in the death-inducing signaling complex (DISC) thereby blocking further recruitment and processing of caspase-8 at the complex. Full length and shorter isoforms have been shown either to induce apoptosis or to reduce TNFRSF-triggered apoptosis. Lacks enzymatic (caspase) activity. The polypeptide is CASP8 and FADD-like apoptosis regulator (CFLAR) (Homo sapiens (Human)).